We begin with the raw amino-acid sequence, 142 residues long: Putative regulator of rDNA transcription protein 16 (142 aa).

Helical transmembrane passes span 19 to 39 (ILLTVLFGIGWATLDLPVMVA), 84 to 104 (FLLFIGLNTSPCVSETIAIFL), and 111 to 131 (SIFIATEYLFLILLPLRGLCH).

The protein resides in the membrane. Its function is as follows. Identified in a screen for mutants with decreased levels of rDNA transcription. This Saccharomyces cerevisiae (strain ATCC 204508 / S288c) (Baker's yeast) protein is Putative regulator of rDNA transcription protein 16 (RRT16).